Reading from the N-terminus, the 374-residue chain is DNA replication and repair protein RecF (374 aa).

34-41 (GNNGSGKT) serves as a coordination point for ATP.

It belongs to the RecF family.

The protein localises to the cytoplasm. Functionally, the RecF protein is involved in DNA metabolism; it is required for DNA replication and normal SOS inducibility. RecF binds preferentially to single-stranded, linear DNA. It also seems to bind ATP. This is DNA replication and repair protein RecF from Allorhizobium ampelinum (strain ATCC BAA-846 / DSM 112012 / S4) (Agrobacterium vitis (strain S4)).